Here is a 164-residue protein sequence, read N- to C-terminus: MSCDEGKLFVGGLSFDTDEQCLETVFSKYGQIQEVVVVKDRETKRSRGFGFVTFENCEDAKDAMAGMNGKTVDGRQIRVDQAGKSSNDRRGGYRGGSSGGGRGFFRGGRGRGGGGYGGSSRFDNRSGGGYGGWIPDYYSSGRESSYGDRSAGGRSYRDSYDSYG.

An RRM domain is found at 6–84 (GKLFVGGLSF…RQIRVDQAGK (79 aa)). Positions 65–164 (AGMNGKTVDG…SYRDSYDSYG (100 aa)) are disordered. Over residues 93 to 118 (YRGGSSGGGRGFFRGGRGRGGGGYGG) the composition is skewed to gly residues. Residues 155–164 (SYRDSYDSYG) are compositionally biased toward basic and acidic residues.

Interacts with prmt1. Interacts with elavl1/elrA (via RRM3). Associates with ribosomes. In terms of processing, methylated on arginine residues within RGG motifs. Methylation by prmt1 promotes cytoplasmic accumulation.

The protein resides in the nucleus. It localises to the nucleoplasm. The protein localises to the cytoplasm. In terms of biological role, cold-inducible mRNA binding protein. Acts cooperatively with elavl1/elrA to stabilize AU-rich element (ARE)-containing mRNAs by binding to them and inhibiting their deadenylation. Essential for embryonic gastrulation and neural development, acting to maintain the expression of a set of adhesion molecules, and cell movement during embryogenesis. Required for pronephros development. May play a role in hibernation. This is Cold-inducible RNA-binding protein from Aquarana catesbeiana (American bullfrog).